An 819-amino-acid chain; its full sequence is THO complex subunit 5B (819 aa).

The interval 285–332 is disordered; sequence ARQQSRKDSGMSSNTESSRLEDDGPDDDDDGQRRRKRPKKLTSKEGSD.

It belongs to the THOC5 family. In terms of assembly, component of the THO complex, which is composed of THO1, THO2, THO3, THO5, THO6 and THO7.

It is found in the nucleus. In terms of biological role, acts as a component of the THO subcomplex of the TREX complex which is thought to couple mRNA transcription, processing and nuclear export. The chain is THO complex subunit 5B (THO5B) from Arabidopsis thaliana (Mouse-ear cress).